A 476-amino-acid polypeptide reads, in one-letter code: FAD-dependent monooxygenase dpasE (476 aa).

Positions 1–21 (MSQPAFKIIIVGCSVTGLTLA) are cleaved as a signal peptide. Glu-35, Ala-49, and Arg-109 together coordinate FAD. N-linked (GlcNAc...) asparagine glycosylation is found at Asn-190 and Asn-219. Residues Asp-308 and Ala-321 each contribute to the FAD site. Residues 441-461 (GAGFWITAFLSLSLLAVAATM) form a helical membrane-spanning segment.

The protein belongs to the paxM FAD-dependent monooxygenase family. FAD is required as a cofactor.

The protein resides in the membrane. It functions in the pathway secondary metabolite biosynthesis; terpenoid biosynthesis. Functionally, FAD-dependent monooxygenase; part of the gene cluster that mediates the biosynthesis of the diterpenoid pyrones subglutinols A and B. The first step of the pathway is the synthesis of the alpha-pyrone moiety by the polyketide synthase dpasA via condensation of one acetyl-CoA starter unit with 3 malonyl-CoA units and 2 methylations. The alpha-pyrone is then combined with geranylgeranyl pyrophosphate (GGPP) formed by the GGPP synthase dpasD through the action of the prenyltransferase dpasC to yield a linear alpha-pyrone diterpenoid. Subsequent steps in the diterpenoid pyrone biosynthetic pathway involve the decalin core formation, which is initiated by the epoxidation of the C10-C11 olefin by the FAD-dependent oxidoreductase dpasE, and is followed by a cyclization cascade catalyzed by the terpene cyclase dpasB. The FAD-linked oxidoreductase dpasF is then involved in tetrahydrofuran (THF) ring formation at the C5 unit to complete the formation of subglutinols A and B. DpasF possesses also an additional catalytic ability of multi-step oxidations to generate a new DDP analog with an enone system at the C5 named FDDP A. The protein is FAD-dependent monooxygenase dpasE of Apiospora sacchari (Arthrinium sacchari).